The sequence spans 708 residues: Ion-translocating oxidoreductase complex subunit C (708 aa).

4Fe-4S ferredoxin-type domains follow at residues 369–397 (GEPQ…QQLY) and 407–436 (KATT…VQYF). Residues cysteine 377, cysteine 380, cysteine 383, cysteine 387, cysteine 416, cysteine 419, cysteine 422, and cysteine 426 each coordinate [4Fe-4S] cluster. The interval 599–686 (KARKLEQQQS…EEQVDPRKAA (88 aa)) is disordered.

Belongs to the 4Fe4S bacterial-type ferredoxin family. RnfC subfamily. The complex is composed of six subunits: RsxA, RsxB, RsxC, RsxD, RsxE and RsxG. [4Fe-4S] cluster serves as cofactor.

It is found in the cell inner membrane. Part of a membrane-bound complex that couples electron transfer with translocation of ions across the membrane. Required to maintain the reduced state of SoxR. The protein is Ion-translocating oxidoreductase complex subunit C of Escherichia coli (strain 55989 / EAEC).